A 473-amino-acid chain; its full sequence is Photosystem II CP43 reaction center protein (473 aa).

Residues Met-1–Glu-14 constitute a propeptide that is removed on maturation. Thr-15 carries the post-translational modification N-acetylthreonine. At Thr-15 the chain carries Phosphothreonine. 5 helical membrane-spanning segments follow: residues Leu-69–Ala-93, Ile-134–Asn-155, Lys-178–Thr-200, Lys-255–Ser-275, and Trp-291–Ala-312. Glu-367 is a binding site for [CaMn4O5] cluster. The chain crosses the membrane as a helical span at residues Arg-447 to Pro-471.

The protein belongs to the PsbB/PsbC family. PsbC subfamily. PSII is composed of 1 copy each of membrane proteins PsbA, PsbB, PsbC, PsbD, PsbE, PsbF, PsbH, PsbI, PsbJ, PsbK, PsbL, PsbM, PsbT, PsbX, PsbY, PsbZ, Psb30/Ycf12, at least 3 peripheral proteins of the oxygen-evolving complex and a large number of cofactors. It forms dimeric complexes. Requires Binds multiple chlorophylls and provides some of the ligands for the Ca-4Mn-5O cluster of the oxygen-evolving complex. It may also provide a ligand for a Cl- that is required for oxygen evolution. PSII binds additional chlorophylls, carotenoids and specific lipids. as cofactor.

The protein resides in the plastid. It is found in the chloroplast thylakoid membrane. Its function is as follows. One of the components of the core complex of photosystem II (PSII). It binds chlorophyll and helps catalyze the primary light-induced photochemical processes of PSII. PSII is a light-driven water:plastoquinone oxidoreductase, using light energy to abstract electrons from H(2)O, generating O(2) and a proton gradient subsequently used for ATP formation. The protein is Photosystem II CP43 reaction center protein of Huperzia lucidula (Shining clubmoss).